The sequence spans 349 residues: Protein RecA (349 aa).

65-72 (GPESSGKT) contributes to the ATP binding site.

The protein belongs to the RecA family.

Its subcellular location is the cytoplasm. In terms of biological role, can catalyze the hydrolysis of ATP in the presence of single-stranded DNA, the ATP-dependent uptake of single-stranded DNA by duplex DNA, and the ATP-dependent hybridization of homologous single-stranded DNAs. It interacts with LexA causing its activation and leading to its autocatalytic cleavage. This is Protein RecA from Aliarcobacter butzleri (strain RM4018) (Arcobacter butzleri).